The primary structure comprises 126 residues: Fluoride-specific ion channel FluC (126 aa).

Helical transmembrane passes span 3–23 (FAIL…RFLV), 37–57 (IGTL…IACV), 70–90 (VIGL…MDNV), and 104–124 (NVLL…HWLM). The Na(+) site is built by Gly77 and Thr80.

This sequence belongs to the fluoride channel Fluc/FEX (TC 1.A.43) family.

Its subcellular location is the cell inner membrane. The catalysed reaction is fluoride(in) = fluoride(out). Na(+) is not transported, but it plays an essential structural role and its presence is essential for fluoride channel function. Functionally, fluoride-specific ion channel. Important for reducing fluoride concentration in the cell, thus reducing its toxicity. This is Fluoride-specific ion channel FluC from Vibrio cholerae serotype O1 (strain ATCC 39541 / Classical Ogawa 395 / O395).